The sequence spans 443 residues: Putative phosphoribosyl transferase MT0597 (443 aa).

In the N-terminal section; belongs to the purine/pyrimidine phosphoribosyltransferase family. This sequence in the C-terminal section; belongs to the dienelactone hydrolase family.

The polypeptide is Putative phosphoribosyl transferase MT0597 (Mycobacterium tuberculosis (strain CDC 1551 / Oshkosh)).